Reading from the N-terminus, the 605-residue chain is Aspartate--tRNA(Asp/Asn) ligase (605 aa).

Glutamate 183 is a binding site for L-aspartate. Residues 207 to 210 (QLFK) are aspartate. Arginine 229 lines the L-aspartate pocket. ATP is bound by residues 229-231 (RDE) and glutamine 238. Histidine 457 contributes to the L-aspartate binding site. ATP is bound at residue glutamate 497. Residue arginine 504 coordinates L-aspartate. Residue 549-552 (GLDR) coordinates ATP.

The protein belongs to the class-II aminoacyl-tRNA synthetase family. Type 1 subfamily. As to quaternary structure, homodimer.

Its subcellular location is the cytoplasm. It catalyses the reaction tRNA(Asx) + L-aspartate + ATP = L-aspartyl-tRNA(Asx) + AMP + diphosphate. Functionally, aspartyl-tRNA synthetase with relaxed tRNA specificity since it is able to aspartylate not only its cognate tRNA(Asp) but also tRNA(Asn). Reaction proceeds in two steps: L-aspartate is first activated by ATP to form Asp-AMP and then transferred to the acceptor end of tRNA(Asp/Asn). The polypeptide is Aspartate--tRNA(Asp/Asn) ligase (Persephonella marina (strain DSM 14350 / EX-H1)).